The following is a 283-amino-acid chain: 4-hydroxy-3-methylbut-2-enyl diphosphate reductase (283 aa).

Cys-12 provides a ligand contact to [4Fe-4S] cluster. Residues His-41 and His-74 each contribute to the (2E)-4-hydroxy-3-methylbut-2-enyl diphosphate site. Residues His-41 and His-74 each coordinate dimethylallyl diphosphate. Isopentenyl diphosphate is bound by residues His-41 and His-74. Cys-96 lines the [4Fe-4S] cluster pocket. His-124 is a binding site for (2E)-4-hydroxy-3-methylbut-2-enyl diphosphate. His-124 provides a ligand contact to dimethylallyl diphosphate. Residue His-124 coordinates isopentenyl diphosphate. Glu-126 acts as the Proton donor in catalysis. Thr-161 is a (2E)-4-hydroxy-3-methylbut-2-enyl diphosphate binding site. Cys-189 contributes to the [4Fe-4S] cluster binding site. Positions 217, 219, and 261 each coordinate (2E)-4-hydroxy-3-methylbut-2-enyl diphosphate. Dimethylallyl diphosphate contacts are provided by Ser-217, Asn-219, and Ser-261. Residues Ser-217, Asn-219, and Ser-261 each coordinate isopentenyl diphosphate.

Belongs to the IspH family. It depends on [4Fe-4S] cluster as a cofactor.

The catalysed reaction is isopentenyl diphosphate + 2 oxidized [2Fe-2S]-[ferredoxin] + H2O = (2E)-4-hydroxy-3-methylbut-2-enyl diphosphate + 2 reduced [2Fe-2S]-[ferredoxin] + 2 H(+). It catalyses the reaction dimethylallyl diphosphate + 2 oxidized [2Fe-2S]-[ferredoxin] + H2O = (2E)-4-hydroxy-3-methylbut-2-enyl diphosphate + 2 reduced [2Fe-2S]-[ferredoxin] + 2 H(+). The protein operates within isoprenoid biosynthesis; dimethylallyl diphosphate biosynthesis; dimethylallyl diphosphate from (2E)-4-hydroxy-3-methylbutenyl diphosphate: step 1/1. Its pathway is isoprenoid biosynthesis; isopentenyl diphosphate biosynthesis via DXP pathway; isopentenyl diphosphate from 1-deoxy-D-xylulose 5-phosphate: step 6/6. In terms of biological role, catalyzes the conversion of 1-hydroxy-2-methyl-2-(E)-butenyl 4-diphosphate (HMBPP) into a mixture of isopentenyl diphosphate (IPP) and dimethylallyl diphosphate (DMAPP). Acts in the terminal step of the DOXP/MEP pathway for isoprenoid precursor biosynthesis. The chain is 4-hydroxy-3-methylbut-2-enyl diphosphate reductase from Anaeromyxobacter sp. (strain Fw109-5).